The primary structure comprises 877 residues: Phosphoenolpyruvate carboxylase (877 aa).

Catalysis depends on residues His137 and Lys544.

Belongs to the PEPCase type 1 family. Mg(2+) is required as a cofactor.

The catalysed reaction is oxaloacetate + phosphate = phosphoenolpyruvate + hydrogencarbonate. In terms of biological role, forms oxaloacetate, a four-carbon dicarboxylic acid source for the tricarboxylic acid cycle. The chain is Phosphoenolpyruvate carboxylase from Edwardsiella ictaluri (strain 93-146).